The chain runs to 128 residues: Small ribosomal subunit protein uS13 (128 aa).

The disordered stretch occupies residues 97–128 (PVRGQRTRSNARTRKGPRPSRIKTKKKKEQTV). The segment covering 101 to 128 (QRTRSNARTRKGPRPSRIKTKKKKEQTV) has biased composition (basic residues).

The protein belongs to the universal ribosomal protein uS13 family. Part of the 30S ribosomal subunit. Forms a loose heterodimer with protein S19. Forms two bridges to the 50S subunit in the 70S ribosome.

In terms of biological role, located at the top of the head of the 30S subunit, it contacts several helices of the 16S rRNA. In the 70S ribosome it contacts the 23S rRNA (bridge B1a) and protein L5 of the 50S subunit (bridge B1b), connecting the 2 subunits; these bridges are implicated in subunit movement. Contacts the tRNAs in the A and P-sites. The polypeptide is Small ribosomal subunit protein uS13 (Pseudothermotoga lettingae (strain ATCC BAA-301 / DSM 14385 / NBRC 107922 / TMO) (Thermotoga lettingae)).